Reading from the N-terminus, the 297-residue chain is MHTFYGTGTALITPFKKDHSVDYDAFKNLIEFNISSGVDYIVVNGTTAESATTSKEEKAKLLEVALDVNNGRVPVMYGIGGNDTAEVIQRIGSADFKGVDALLSVCPYYNKPSQEGVFQHYKAIAEKCPVPVLAYNVPGRTGINISAKTSIRLSEVKNIFGIKEASGDLVQALEIIKNTPNEFLVISGDDLLAVPTISLGAVGAISVLSNTYPAKFSEMIKAAIQSRFQQATQILARFTEMNPLMYEEGNPVGVKSLLELMGICSSEVRLPLVKASGELIHKIEQAHVKITREYANH.

Residue Thr47 coordinates pyruvate. Tyr135 serves as the catalytic Proton donor/acceptor. Catalysis depends on Lys163, which acts as the Schiff-base intermediate with substrate. Ile205 serves as a coordination point for pyruvate.

This sequence belongs to the DapA family. In terms of assembly, homotetramer; dimer of dimers.

It localises to the cytoplasm. It carries out the reaction L-aspartate 4-semialdehyde + pyruvate = (2S,4S)-4-hydroxy-2,3,4,5-tetrahydrodipicolinate + H2O + H(+). Its pathway is amino-acid biosynthesis; L-lysine biosynthesis via DAP pathway; (S)-tetrahydrodipicolinate from L-aspartate: step 3/4. Functionally, catalyzes the condensation of (S)-aspartate-beta-semialdehyde [(S)-ASA] and pyruvate to 4-hydroxy-tetrahydrodipicolinate (HTPA). This chain is 4-hydroxy-tetrahydrodipicolinate synthase, found in Cytophaga hutchinsonii (strain ATCC 33406 / DSM 1761 / CIP 103989 / NBRC 15051 / NCIMB 9469 / D465).